The chain runs to 342 residues: Phosphate acyltransferase (342 aa).

Belongs to the PlsX family. In terms of assembly, homodimer. Probably interacts with PlsY.

The protein localises to the cytoplasm. The catalysed reaction is a fatty acyl-[ACP] + phosphate = an acyl phosphate + holo-[ACP]. Its pathway is lipid metabolism; phospholipid metabolism. Catalyzes the reversible formation of acyl-phosphate (acyl-PO(4)) from acyl-[acyl-carrier-protein] (acyl-ACP). This enzyme utilizes acyl-ACP as fatty acyl donor, but not acyl-CoA. This is Phosphate acyltransferase from Shewanella amazonensis (strain ATCC BAA-1098 / SB2B).